The primary structure comprises 73 residues: Protein SlyX homolog (73 aa).

Belongs to the SlyX family.

This chain is Protein SlyX homolog, found in Haemophilus ducreyi (strain 35000HP / ATCC 700724).